Here is a 1338-residue protein sequence, read N- to C-terminus: ABC-type transporter kk1G (1338 aa).

Positions 1–21 (MSAIELPPLRSRSEEAARAEH) are disordered. Over residues 11 to 21 (SRSEEAARAEH) the composition is skewed to basic and acidic residues. The next 6 membrane-spanning stretches (helical) occupy residues 75–95 (YFLI…MPLM), 130–150 (LYIF…MLAI), 203–223 (HFAT…VALV), 230–250 (LIAS…FPPF), 312–332 (TMSP…WFGI), and 340–360 (ISSV…VMNI). The ABC transmembrane type-1 1 domain occupies 80–372 (LCCFTSIGAG…VASPIISIAK (293 aa)). The region spanning 405–706 (ITFINVAFSY…GDGVYYGLVH (302 aa)) is the ABC transporter 1 domain. 440–447 (GPSGSGKS) contributes to the ATP binding site. Disordered stretches follow at residues 473-518 (EIPS…TCTG) and 715-747 (EDDD…HASR). Helical transmembrane passes span 777-797 (VCCI…YIFA), 816-836 (FWAG…YLLG), 895-917 (MSMA…VYGW), 919-941 (LSLV…RTRL), 1003-1023 (IIFA…FWYG), and 1037-1057 (FFIV…WFSF). Positions 777–1063 (VCCIGILGAG…WFSFTPSMAQ (287 aa)) constitute an ABC transmembrane type-1 2 domain. The region spanning 1096-1333 (IEFQHVSFKY…KGVYWQMCQA (238 aa)) is the ABC transporter 2 domain. Residue 1130–1137 (GSSGCGKS) participates in ATP binding.

Belongs to the ABC transporter superfamily. ABCB family. Multidrug resistance exporter (TC 3.A.1.201) subfamily.

The protein localises to the cell membrane. It participates in secondary metabolite biosynthesis. In terms of biological role, ABC transporter; part of the gene cluster that mediates the biosynthesis of KK-1, a novel cyclic depsipeptide with 10 residues which is a promising active compound with high activity against many plant pathogens, especially Botrytis cinerea. Is probably directly involved in the secretion of KK-1 and thus confers self-tolerance against KK-1. The protein is ABC-type transporter kk1G of Curvularia clavata.